Here is a 217-residue protein sequence, read N- to C-terminus: Killer cell lectin-like receptor subfamily B member 1F (217 aa).

The Cytoplasmic portion of the chain corresponds to 1 to 45 (MDTSRVYGNVKTFRSPGHKQASFPSLSTDACRCPHWHHLALKLGC). An LCK-binding motif motif is present at residues 31-34 (CRCP). Residues 46–66 (ATLILLLLTLIGLSVFVRFLV) traverse the membrane as a helical; Signal-anchor for type II membrane protein segment. The Extracellular portion of the chain corresponds to 67–217 (QKPLIEKCSM…WICQKTLKHV (151 aa)). Residues 101-211 (HRNKCLIISQ…CSSDNHWICQ (111 aa)) form the C-type lectin domain. Disulfide bonds link C122–C210 and C189–C202.

In terms of tissue distribution, expressed in natural killer cells and a subset of T-cells.

It localises to the membrane. Binds CLEC2I/Clr-g leading to activation of natural killer cells or stimulation of IL-2 production and proliferation of T-cells in response to antigen stimulation. May contribute to the formation of the immunological synapse between T-cells and antigen-presenting dendritic cells. In Rattus norvegicus (Rat), this protein is Killer cell lectin-like receptor subfamily B member 1F.